We begin with the raw amino-acid sequence, 908 residues long: MFDTPAVFARITEAAAEAADNAALRGAVVAILRDVQNAGRAAIAEGFAEDPFAARPLTRAYTYLTDGMVKTAMYVASEILHPLATPTQGERIAVLAVGGFGRGEMAPFSDVDLLFLTPYKITAWAESVIESMLYILWDLRLKVGHSSRTVKDCIRLGRDDFTIRTAMLEHRFLAGHAPLARSLDQRLKSELYKDTQREFIEAKLEERDARHRKQGERYMVEPNVKEGKGGLRDLQSLYWIAKYIYEVKETAELVPLGLFTPSEYRTFVQAEEFLWAVRAHLHLVTGRATEQLTFDLQVEVAARMGYQDRAGRRGVEVFMQKYFREATRVGELTRIFLTKLEAAHMKGAPLLERIFRRRRRIKQGYKVVRGRLDVVDPEAFLADKLNLLRIFEEALRTGMLIHPDAMRLVTANLDLIDDGMRNDKEARRIFLDLLLKHGNPERALRRMNELGVLSAFVPEFEPIVAMMQFNMYHSYTVDEHTIQTIVNLAQIEKGELVESLPLASSILKAGVNRKVLYVALLLHDIGKGRPEDHSILGARIARKVAPRLGLSKADCETVEWLVRYHLLMSDMAQKRDISDPRTVRDFAKAVQTTKRLDLLTVLTVCDIRGVGPNTWNNWKATLLRALHAETKRALEMGMEALNREGRGNEAKKALRTALSDWPAGEVKTEIARHYPPYWQGFNVETHVTFAEMLRQLEHSGDPGGIEIRLDPDEDRDATRACFAMADHPGIFSRMAGALALVGANVVDARSYTTKDGYVTDAFWIQDAEGHPYEAARLPRLSQMILKTLKGEVVARDALKSRDKIKKREKAFNVPTHITFDNEGSDIYTIIEVDTRDRPGLLYDLARALAAANVYIANAVIATYGEQVVDSFYVKDMFGLKYHSEAKQRTLETKLRKAITEGAERAAAS.

Residues 1-360 (MFDTPAVFAR…LERIFRRRRR (360 aa)) are uridylyltransferase. The tract at residues 361–718 (IKQGYKVVRG…LDPDEDRDAT (358 aa)) is uridylyl-removing. An HD domain is found at 477–599 (VDEHTIQTIV…VQTTKRLDLL (123 aa)). ACT domains follow at residues 719 to 801 (RACF…LKSR) and 829 to 904 (IIEV…GAER).

It belongs to the GlnD family. The cofactor is Mg(2+).

The catalysed reaction is [protein-PII]-L-tyrosine + UTP = [protein-PII]-uridylyl-L-tyrosine + diphosphate. The enzyme catalyses [protein-PII]-uridylyl-L-tyrosine + H2O = [protein-PII]-L-tyrosine + UMP + H(+). Its activity is regulated as follows. Uridylyltransferase (UTase) activity is inhibited by glutamine, while glutamine activates uridylyl-removing (UR) activity. Modifies, by uridylylation and deuridylylation, the PII regulatory proteins (GlnB and homologs), in response to the nitrogen status of the cell that GlnD senses through the glutamine level. Under low glutamine levels, catalyzes the conversion of the PII proteins and UTP to PII-UMP and PPi, while under higher glutamine levels, GlnD hydrolyzes PII-UMP to PII and UMP (deuridylylation). Thus, controls uridylylation state and activity of the PII proteins, and plays an important role in the regulation of nitrogen assimilation and metabolism. This Ruegeria pomeroyi (strain ATCC 700808 / DSM 15171 / DSS-3) (Silicibacter pomeroyi) protein is Bifunctional uridylyltransferase/uridylyl-removing enzyme.